A 224-amino-acid chain; its full sequence is MADS-box transcription factor 16 (224 aa).

The region spanning 1 to 61 (MGRGKIEIKR…GKYHEFCSPS (61 aa)) is the MADS-box domain. In terms of domain architecture, K-box spans 84–174 (YENMQRTLSH…QQELGLREEP (91 aa)).

In terms of assembly, may interact with the K-box of MADS4, MADS6 and MADS8. May form a heterodimer with MADS4. In terms of tissue distribution, expressed in lodicules, stamens and carpels.

It is found in the nucleus. Its function is as follows. Probable transcription factor involved in the development of floral organs. Required for normal development of lodicules and stamens (whorls 2 and 3). May function as a heterodimer with MADS4. The sequence is that of MADS-box transcription factor 16 (MADS16) from Oryza sativa subsp. japonica (Rice).